We begin with the raw amino-acid sequence, 514 residues long: Putative GTP-binding protein 6 (514 aa).

The disordered stretch occupies residues 48 to 71 (WAGGGPVRGGGEEDPREDEEEEED). Residues 59–71 (EEDPREDEEEEED) are compositionally biased toward acidic residues. Residues 285 to 449 (PVVSVVGYTN…ALEASVLRAT (165 aa)) form the Hflx-type G domain. Mg(2+) is bound by residues Thr-298 and Thr-319.

The protein belongs to the TRAFAC class OBG-HflX-like GTPase superfamily. HflX GTPase family. The cofactor is Mg(2+).

In Mus musculus (Mouse), this protein is Putative GTP-binding protein 6 (Gtpbp6).